The primary structure comprises 175 residues: Adenine phosphoribosyltransferase (175 aa).

Belongs to the purine/pyrimidine phosphoribosyltransferase family. Homodimer.

It is found in the cytoplasm. It carries out the reaction AMP + diphosphate = 5-phospho-alpha-D-ribose 1-diphosphate + adenine. It functions in the pathway purine metabolism; AMP biosynthesis via salvage pathway; AMP from adenine: step 1/1. Catalyzes a salvage reaction resulting in the formation of AMP, that is energically less costly than de novo synthesis. The sequence is that of Adenine phosphoribosyltransferase from Francisella tularensis subsp. tularensis (strain WY96-3418).